A 101-amino-acid polypeptide reads, in one-letter code: Small ribosomal subunit protein bS6 (101 aa).

This sequence belongs to the bacterial ribosomal protein bS6 family.

Binds together with bS18 to 16S ribosomal RNA. This is Small ribosomal subunit protein bS6 from Staphylococcus saprophyticus subsp. saprophyticus (strain ATCC 15305 / DSM 20229 / NCIMB 8711 / NCTC 7292 / S-41).